The sequence spans 1088 residues: Serine/threonine-protein kinase LATS2 (1088 aa).

The segment at 24-49 (EGLKQPSKSSVQGLPAGPNSDTSLDA) is disordered. Serine 83 carries the post-translational modification Phosphoserine; by AURKA. The UBA domain occupies 98-139 (EVNRQMLQELVNAGCDQEMAGRALKQTGSRSIEAALEYISKM). The interaction with ubiquitinated AMOTL2 stretch occupies residues 101-141 (RQMLQELVNAGCDQEMAGRALKQTGSRSIEAALEYISKMGY). A compositionally biased stretch (polar residues) spans 271–280 (RSPSFQSKTP). A disordered region spans residues 271–323 (RSPSFQSKTPPETGGYASLPTKGQGGPPGAGLAFPPPAAGLYVPHPHHKQAGP). Threonine 279 carries the post-translational modification Phosphothreonine. Serine 380 is subject to Phosphoserine. Disordered stretches follow at residues 383-428 (KPGL…SLPA) and 454-483 (PQTA…AAEG). A compositionally biased stretch (polar residues) spans 404-413 (SRTNSFNSHQ). The segment covering 466 to 478 (VPAPAPAPAPAPA) has biased composition (pro residues). A PPxY motif motif is present at residues 515–518 (PPPY). The tract at residues 543-592 (SLRAGPNEPEGGDKSRKSAKGDKGGKDKKQIQTSPVPVRKNSRDEEKRES) is disordered. Positions 553–572 (GGDKSRKSAKGDKGGKDKKQ) are enriched in basic and acidic residues. Serine 576 is modified (phosphoserine). Residues 583-592 (NSRDEEKRES) are compositionally biased toward basic and acidic residues. One can recognise a Protein kinase domain in the interval 668–973 (FVKIKTLGIG…ADDLKAHPFF (306 aa)). Residues 674–682 (LGIGAFGEV) and lysine 697 contribute to the ATP site. Aspartate 791 (proton acceptor) is an active-site residue. Residues 974-1052 (SAIDFSSDIR…RRFFDDNGYP (79 aa)) form the AGC-kinase C-terminal domain. A disordered region spans residues 994 to 1022 (SHPMDTSNFDPVDEESPWNDASEGSTKAW). Phosphothreonine is present on threonine 1041. Residues 1056–1088 (PKPSGAEASQAESSDLESSDLVDQTEGCQPVYV) are disordered.

This sequence belongs to the protein kinase superfamily. AGC Ser/Thr protein kinase family. As to quaternary structure, interacts with and is phosphorylated by AURKA. Binds to AR. Interacts with AJUBA during mitosis and this complex regulates organization of the spindle apparatus through recruitment of gamma-tubulin to the centrosome. Interacts (via PPxY motif) with YAP1 (via WW domains). Interacts with MOB1A and MOB1B. Interacts with LIMD1, WTIP and AJUBA. Interacts with SNAI1. Interacts with WWC1, WWC2 and WWC3 (via their WW domains). Interacts (via UBA domain) with ubiquitinated AMOTL2; the interaction promotes LATS2 phosphorylation of YAP1. Mg(2+) serves as cofactor. Autophosphorylated and phosphorylated during M-phase and the G1/S-phase of the cell cycle. Phosphorylated and activated by STK3/MST2. Phosphorylated by MAP4Ks; in parallel to STK3/MST2 and resulting to its activation. Phosphorylation by NUAK2 may regulate its activity in phosphorylation and inactivation YAP1. Expressed at high levels in heart and skeletal muscle and at lower levels in all other tissues examined.

It localises to the cytoplasm. The protein localises to the cytoskeleton. Its subcellular location is the microtubule organizing center. The protein resides in the centrosome. It is found in the spindle pole. It localises to the nucleus. It catalyses the reaction L-seryl-[protein] + ATP = O-phospho-L-seryl-[protein] + ADP + H(+). It carries out the reaction L-threonyl-[protein] + ATP = O-phospho-L-threonyl-[protein] + ADP + H(+). Functionally, negative regulator of YAP1 in the Hippo signaling pathway that plays a pivotal role in organ size control and tumor suppression by restricting proliferation and promoting apoptosis. The core of this pathway is composed of a kinase cascade wherein STK3/MST2 and STK4/MST1, in complex with its regulatory protein SAV1, phosphorylates and activates LATS1/2 in complex with its regulatory protein MOB1, which in turn phosphorylates and inactivates YAP1 oncoprotein and WWTR1/TAZ. Phosphorylation of YAP1 by LATS2 inhibits its translocation into the nucleus to regulate cellular genes important for cell proliferation, cell death, and cell migration. Also phosphorylates YAP1 in response to cell contact inhibition-driven WWP1 ubiquitination of AMOTL2, which results in LATS2 activation. Acts as a tumor suppressor which plays a critical role in centrosome duplication, maintenance of mitotic fidelity and genomic stability. Negatively regulates G1/S transition by down-regulating cyclin E/CDK2 kinase activity. Negative regulator of the androgen receptor. Phosphorylates SNAI1 in the nucleus leading to its nuclear retention and stabilization, which enhances its epithelial-mesenchymal transition and tumor cell invasion/migration activities. This tumor-promoting activity is independent of its effects upon YAP1 or WWTR1/TAZ. Acts as an activator of the NLRP3 inflammasome by mediating phosphorylation of 'Ser-265' of NLRP3 following NLRP3 palmitoylation, promoting NLRP3 activation by NEK7. The protein is Serine/threonine-protein kinase LATS2 of Homo sapiens (Human).